Here is a 493-residue protein sequence, read N- to C-terminus: UDP-N-acetylmuramoylalanine--D-glutamate ligase (493 aa).

126 to 132 (GTNGKTT) contacts ATP.

It belongs to the MurCDEF family.

It is found in the cytoplasm. The catalysed reaction is UDP-N-acetyl-alpha-D-muramoyl-L-alanine + D-glutamate + ATP = UDP-N-acetyl-alpha-D-muramoyl-L-alanyl-D-glutamate + ADP + phosphate + H(+). The protein operates within cell wall biogenesis; peptidoglycan biosynthesis. Its function is as follows. Cell wall formation. Catalyzes the addition of glutamate to the nucleotide precursor UDP-N-acetylmuramoyl-L-alanine (UMA). In Mycolicibacterium smegmatis (strain ATCC 700084 / mc(2)155) (Mycobacterium smegmatis), this protein is UDP-N-acetylmuramoylalanine--D-glutamate ligase.